A 46-amino-acid chain; its full sequence is Photosystem II reaction center protein K (46 aa).

Positions 1-9 (MLILFNTFA) are excised as a propeptide. Residues 25–45 (LPLIPLFFFLLVFVWQAAVGF) traverse the membrane as a helical segment.

This sequence belongs to the PsbK family. In terms of assembly, PSII is composed of 1 copy each of membrane proteins PsbA, PsbB, PsbC, PsbD, PsbE, PsbF, PsbH, PsbI, PsbJ, PsbK, PsbL, PsbM, PsbT, PsbX, PsbY, Psb30/Ycf12, peripheral proteins PsbO, CyanoQ (PsbQ), PsbU, PsbV and a large number of cofactors. It forms dimeric complexes.

It localises to the cellular thylakoid membrane. In terms of biological role, one of the components of the core complex of photosystem II (PSII). PSII is a light-driven water:plastoquinone oxidoreductase that uses light energy to abstract electrons from H(2)O, generating O(2) and a proton gradient subsequently used for ATP formation. It consists of a core antenna complex that captures photons, and an electron transfer chain that converts photonic excitation into a charge separation. The chain is Photosystem II reaction center protein K from Prochlorococcus marinus (strain MIT 9301).